Here is a 735-residue protein sequence, read N- to C-terminus: Catalase-peroxidase (735 aa).

2 stretches are compositionally biased toward polar residues: residues 1-10 (MENQNRQNAA) and 17-26 (SVTNQSSNRT). The tract at residues 1-30 (MENQNRQNAAQCPFHGSVTNQSSNRTTNKD) is disordered. The segment at residues 100 to 223 (WHSAGTYRIG…LAAVQMGLIY (124 aa)) is a cross-link (tryptophyl-tyrosyl-methioninium (Trp-Tyr) (with M-249)). His101 acts as the Proton acceptor in catalysis. The segment at residues 223–249 (YVNPEGPDGKPDPKAAARDIRETFRRM) is a cross-link (tryptophyl-tyrosyl-methioninium (Tyr-Met) (with W-100)). His264 is a heme b binding site.

Belongs to the peroxidase family. Peroxidase/catalase subfamily. Homodimer or homotetramer. Heme b serves as cofactor. In terms of processing, formation of the three residue Trp-Tyr-Met cross-link is important for the catalase, but not the peroxidase activity of the enzyme.

The catalysed reaction is H2O2 + AH2 = A + 2 H2O. It catalyses the reaction 2 H2O2 = O2 + 2 H2O. Functionally, bifunctional enzyme with both catalase and broad-spectrum peroxidase activity. Also displays NADH oxidase, INH lyase and isonicotinoyl-NAD synthase activities. The polypeptide is Catalase-peroxidase (Geobacillus stearothermophilus (Bacillus stearothermophilus)).